The following is a 780-amino-acid chain: Striatin (780 aa).

Residues Leu-53–Lys-120 adopt a coiled-coil conformation. Positions Phe-55–Phe-63 are caveolin-binding. Residues Glu-124–Val-145 form a disordered region. Ser-137 bears the Phosphoserine mark. Positions Gln-149–Leu-166 are calmodulin-binding. Thr-225 carries the phosphothreonine modification. Phosphoserine occurs at positions 227, 229, 245, and 259. Disordered stretches follow at residues Phe-290–Arg-321, Glu-334–Lys-353, and Asp-363–Gln-388. A compositionally biased stretch (basic and acidic residues) spans Asn-299–Gln-315. Basic residues predominate over residues Lys-338 to Arg-351. WD repeat units lie at residues Ser-461 to Lys-500, Ala-514 to Tyr-553, Gly-567 to Thr-606, Ser-662 to Ser-701, Ala-704 to Glu-743, and Lys-750 to Val-780.

Belongs to the WD repeat striatin family. In terms of assembly, part of the core of STRIPAK complexes composed of PP2A catalytic and scaffolding subunits, the striatins (PP2A regulatory subunits), the striatin-associated proteins MOB4, STRIP1 and STRIP2, PDCD10 and members of the STE20 kinases, such as STK24 and STK26. Interacts with CTTNBP2; this interaction may regulate dendritic spine distribution of STRN. Activation of glutamate receptors weakens the interaction with CTTNBP2. In terms of tissue distribution, mainly expressed in the central nervous system. Mostly confined in dendrites, not in axons, and is most abundant in dendritic spines.

Its subcellular location is the cytoplasm. It localises to the membrane. It is found in the cell projection. The protein localises to the dendritic spine. Calmodulin-binding scaffolding protein which is the center of the striatin-interacting phosphatase and kinase (STRIPAK) complexes. STRIPAK complexes have critical roles in protein (de)phosphorylation and are regulators of multiple signaling pathways including Hippo, MAPK, nuclear receptor and cytoskeleton remodeling. Different types of STRIPAK complexes are involved in a variety of biological processes such as cell growth, differentiation, apoptosis, metabolism and immune regulation. This Rattus norvegicus (Rat) protein is Striatin (Strn).